Here is a 336-residue protein sequence, read N- to C-terminus: Holliday junction branch migration complex subunit RuvB (336 aa).

The large ATPase domain (RuvB-L) stretch occupies residues 1–181 (MDRIVEIEKF…FGMQFRLEFY (181 aa)). ATP contacts are provided by residues L20, R21, G62, K65, T66, T67, 128–130 (EDF), R171, Y181, and R218. Mg(2+) is bound at residue T66. The interval 182 to 252 (KNEELAIILE…RAKEALDSLG (71 aa)) is small ATPAse domain (RuvB-S). Residues 255–336 (ELGFDAMDLR…KYNKGLFDEK (82 aa)) are head domain (RuvB-H). DNA contacts are provided by R309 and R314.

Belongs to the RuvB family. In terms of assembly, homohexamer. Forms an RuvA(8)-RuvB(12)-Holliday junction (HJ) complex. HJ DNA is sandwiched between 2 RuvA tetramers; dsDNA enters through RuvA and exits via RuvB. An RuvB hexamer assembles on each DNA strand where it exits the tetramer. Each RuvB hexamer is contacted by two RuvA subunits (via domain III) on 2 adjacent RuvB subunits; this complex drives branch migration. In the full resolvosome a probable DNA-RuvA(4)-RuvB(12)-RuvC(2) complex forms which resolves the HJ.

It is found in the cytoplasm. It catalyses the reaction ATP + H2O = ADP + phosphate + H(+). Functionally, the RuvA-RuvB-RuvC complex processes Holliday junction (HJ) DNA during genetic recombination and DNA repair, while the RuvA-RuvB complex plays an important role in the rescue of blocked DNA replication forks via replication fork reversal (RFR). RuvA specifically binds to HJ cruciform DNA, conferring on it an open structure. The RuvB hexamer acts as an ATP-dependent pump, pulling dsDNA into and through the RuvAB complex. RuvB forms 2 homohexamers on either side of HJ DNA bound by 1 or 2 RuvA tetramers; 4 subunits per hexamer contact DNA at a time. Coordinated motions by a converter formed by DNA-disengaged RuvB subunits stimulates ATP hydrolysis and nucleotide exchange. Immobilization of the converter enables RuvB to convert the ATP-contained energy into a lever motion, pulling 2 nucleotides of DNA out of the RuvA tetramer per ATP hydrolyzed, thus driving DNA branch migration. The RuvB motors rotate together with the DNA substrate, which together with the progressing nucleotide cycle form the mechanistic basis for DNA recombination by continuous HJ branch migration. Branch migration allows RuvC to scan DNA until it finds its consensus sequence, where it cleaves and resolves cruciform DNA. The sequence is that of Holliday junction branch migration complex subunit RuvB from Campylobacter lari (strain RM2100 / D67 / ATCC BAA-1060).